Reading from the N-terminus, the 174-residue chain is Ribosome maturation factor RimM (174 aa).

Residues 91–164 enclose the PRC barrel domain; the sequence is DDAWYPHQLQ…KVVLSPPGGL (74 aa).

This sequence belongs to the RimM family. Binds ribosomal protein uS19.

Its subcellular location is the cytoplasm. Functionally, an accessory protein needed during the final step in the assembly of 30S ribosomal subunit, possibly for assembly of the head region. Essential for efficient processing of 16S rRNA. May be needed both before and after RbfA during the maturation of 16S rRNA. It has affinity for free ribosomal 30S subunits but not for 70S ribosomes. In Kineococcus radiotolerans (strain ATCC BAA-149 / DSM 14245 / SRS30216), this protein is Ribosome maturation factor RimM.